The primary structure comprises 371 residues: Opine oxidase subunit B (371 aa).

As to quaternary structure, heterodimer of a subunit A and a subunit B.

Its pathway is opine metabolism; octopine degradation. Functionally, oxidative cleavage of octopine into L-arginine and pyruvate. In Agrobacterium tumefaciens (strain Ach5), this protein is Opine oxidase subunit B (ooxB).